Consider the following 99-residue polypeptide: uncharacterized protein (99 aa).

2 disordered regions span residues 1-24 and 49-99; these read MKAT…VRAT and SVRT…RCAT. Composition is skewed to basic residues over residues 15-24 and 71-81; these read VRRRRRVRAT and SRRRGRPRSSR.

This is an uncharacterized protein from Streptomyces fradiae (Streptomyces roseoflavus).